Here is a 183-residue protein sequence, read N- to C-terminus: ATP synthase subunit delta (183 aa).

The protein belongs to the ATPase delta chain family. As to quaternary structure, F-type ATPases have 2 components, F(1) - the catalytic core - and F(0) - the membrane proton channel. F(1) has five subunits: alpha(3), beta(3), gamma(1), delta(1), epsilon(1). F(0) has three main subunits: a(1), b(2) and c(10-14). The alpha and beta chains form an alternating ring which encloses part of the gamma chain. F(1) is attached to F(0) by a central stalk formed by the gamma and epsilon chains, while a peripheral stalk is formed by the delta and b chains.

The protein localises to the cell inner membrane. Functionally, f(1)F(0) ATP synthase produces ATP from ADP in the presence of a proton or sodium gradient. F-type ATPases consist of two structural domains, F(1) containing the extramembraneous catalytic core and F(0) containing the membrane proton channel, linked together by a central stalk and a peripheral stalk. During catalysis, ATP synthesis in the catalytic domain of F(1) is coupled via a rotary mechanism of the central stalk subunits to proton translocation. This protein is part of the stalk that links CF(0) to CF(1). It either transmits conformational changes from CF(0) to CF(1) or is implicated in proton conduction. This is ATP synthase subunit delta from Desulforapulum autotrophicum (strain ATCC 43914 / DSM 3382 / VKM B-1955 / HRM2) (Desulfobacterium autotrophicum).